A 190-amino-acid polypeptide reads, in one-letter code: Orotate phosphoribosyltransferase (190 aa).

5-phospho-alpha-D-ribose 1-diphosphate-binding positions include Arg-101, Lys-102, Lys-105, His-107, and 128–136 (EDVVTTGGS). Orotate-binding residues include Thr-132 and Arg-160.

This sequence belongs to the purine/pyrimidine phosphoribosyltransferase family. PyrE subfamily. Homodimer. The cofactor is Mg(2+).

The enzyme catalyses orotidine 5'-phosphate + diphosphate = orotate + 5-phospho-alpha-D-ribose 1-diphosphate. It participates in pyrimidine metabolism; UMP biosynthesis via de novo pathway; UMP from orotate: step 1/2. In terms of biological role, catalyzes the transfer of a ribosyl phosphate group from 5-phosphoribose 1-diphosphate to orotate, leading to the formation of orotidine monophosphate (OMP). This Synechococcus sp. (strain CC9605) protein is Orotate phosphoribosyltransferase.